We begin with the raw amino-acid sequence, 370 residues long: Sphingosine 1-phosphate receptor 2 (370 aa).

At Met-1–Asn-57 the chain is on the extracellular side. N-linked (GlcNAc...) asparagine glycosylation occurs at Asn-24. Residues Ile-58–Val-78 form a helical membrane-spanning segment. Topologically, residues Phe-79–Ala-87 are cytoplasmic. A helical membrane pass occupies residues Met-88 to Ala-108. The Extracellular segment spans residues Asn-109 to Arg-128. A helical transmembrane segment spans residues Glu-129–Glu-149. At Arg-150–Arg-167 the chain is on the cytoplasmic side. The chain crosses the membrane as a helical span at residues Met-168 to Ile-193. The Extracellular segment spans residues Asn-194–Ser-219. Residues Ile-220–Val-230 form a helical membrane-spanning segment. Residues Arg-231–Thr-254 lie on the Cytoplasmic side of the membrane. A helical transmembrane segment spans residues Val-255–Leu-275. Residues Asp-276–Asn-289 lie on the Extracellular side of the membrane. Residues Ala-290–Leu-310 form a helical membrane-spanning segment. Topologically, residues Arg-311–Val-370 are cytoplasmic. The S-palmitoyl cysteine moiety is linked to residue Cys-325.

The protein belongs to the G-protein coupled receptor 1 family.

It localises to the cell membrane. Its function is as follows. Receptor for the lysosphingolipid sphingosine 1-phosphate (S1P). S1P receptor is critical for cell migration and epithelial integrity during vertebrate embryogenesis. Receptor for the chemokine-like protein FAM19A5. Mediates the inhibitory effect of FAM19A5 on vascular smooth muscle cell proliferation and migration. The polypeptide is Sphingosine 1-phosphate receptor 2 (s1pr2) (Danio rerio (Zebrafish)).